A 550-amino-acid chain; its full sequence is Chaperonin GroEL (550 aa).

ATP is bound by residues 30-33, K51, 87-91, G415, and D496; these read TLGP and DGTTT. The tract at residues 526–550 is disordered; that stretch reads PEDEKMPPMPPGGGMGGMGGMGGMY. The span at 537-550 shows a compositional bias: gly residues; that stretch reads GGGMGGMGGMGGMY.

Belongs to the chaperonin (HSP60) family. Forms a cylinder of 14 subunits composed of two heptameric rings stacked back-to-back. Interacts with the co-chaperonin GroES.

The protein localises to the cytoplasm. The catalysed reaction is ATP + H2O + a folded polypeptide = ADP + phosphate + an unfolded polypeptide.. Functionally, together with its co-chaperonin GroES, plays an essential role in assisting protein folding. The GroEL-GroES system forms a nano-cage that allows encapsulation of the non-native substrate proteins and provides a physical environment optimized to promote and accelerate protein folding. The polypeptide is Chaperonin GroEL (Chloroherpeton thalassium (strain ATCC 35110 / GB-78)).